Here is a 747-residue protein sequence, read N- to C-terminus: Mediator of RNA polymerase II transcription subunit 25 (747 aa).

The segment at 1–226 (MVPGSEGPAR…PRHMVLVRGL (226 aa)) is interaction with the Mediator complex. Disordered stretches follow at residues 233–274 (GSAP…QYQV) and 299–390 (LGPR…PALG). 2 stretches are compositionally biased toward pro residues: residues 263-272 (QPLPPVPPQY) and 326-342 (PQLPPGPPGAPKPPPAS). The interaction with VP16 stretch occupies residues 389-543 (LGGQQSVSNK…VNGIRQVITN (155 aa)). Residues 395–545 (VSNKLLAWSG…GIRQVITNHK (151 aa)) form an interaction with CREBBP region. Residues 548 to 747 (QQQKLEQQQR…MEDDILMDLI (200 aa)) are disordered. Interaction with RARA regions lie at residues 564–653 (APPG…LLNP) and 640–707 (PGAN…WPAQ). The span at 598-611 (ASGATGQPQPQGTA) shows a compositional bias: low complexity. A compositionally biased stretch (pro residues) spans 612 to 634 (QPPPGAPQGPPGAASGPPPPGPI). The short motif at 646–650 (LRSLL) is the LXXLL motif element. Composition is skewed to pro residues over residues 652–664 (NPPPPQTGVPPPQ), 673–683 (PGAPALLPPPH), and 691–713 (LGPPLLHPPPAQSWPAQLPPRAP). R725 is modified (asymmetric dimethylarginine). Over residues 738-747 (MEDDILMDLI) the composition is skewed to acidic residues.

Belongs to the Mediator complex subunit 25 family. Component of the Mediator complex, which is composed of MED1, MED4, MED6, MED7, MED8, MED9, MED10, MED11, MED12, MED13, MED13L, MED14, MED15, MED16, MED17, MED18, MED19, MED20, MED21, MED22, MED23, MED24, MED25, MED26, MED27, MED29, MED30, MED31, CCNC, CDK8 and CDC2L6/CDK11. The MED12, MED13, CCNC and CDK8 subunits form a distinct module termed the CDK8 module. Mediator containing the CDK8 module is less active than Mediator lacking this module in supporting transcriptional activation. Individual preparations of the Mediator complex lacking one or more distinct subunits have been variously termed ARC, CRSP, DRIP, PC2, SMCC and TRAP. Interacts with CREBBP. Interacts with ESR1, GR, RARA, RXRA and THRB in a ligand-dependent fashion. Binds the Herpes simplex virus activator VP16. As to expression, ubiquitously expressed. Highest levels in brain, heart, kidney, peripheral leukocytes, placenta, skeletal muscle and spleen.

It is found in the nucleus. Functionally, component of the Mediator complex, a coactivator involved in the regulated transcription of nearly all RNA polymerase II-dependent genes. Mediator functions as a bridge to convey information from gene-specific regulatory proteins to the basal RNA polymerase II transcription machinery. Mediator is recruited to promoters by direct interactions with regulatory proteins and serves as a scaffold for the assembly of a functional preinitiation complex with RNA polymerase II and the general transcription factors. Required for RARA/RXRA-mediated transcription. The protein is Mediator of RNA polymerase II transcription subunit 25 (MED25) of Homo sapiens (Human).